The chain runs to 466 residues: Mitochondrial-processing peptidase subunit beta (466 aa).

Residue His-73 participates in Zn(2+) binding. Glu-76 serves as the catalytic Proton acceptor. Zn(2+) contacts are provided by His-77 and Glu-153.

The protein belongs to the peptidase M16 family. In terms of assembly, heterodimer of mppA (alpha) and mppB (beta) subunits, forming the mitochondrial processing protease (MPP) in which mppA is involved in substrate recognition and binding and mppB is the catalytic subunit. Zn(2+) serves as cofactor.

It is found in the mitochondrion matrix. It catalyses the reaction Release of N-terminal transit peptides from precursor proteins imported into the mitochondrion, typically with Arg in position P2.. Binding to mppA is required for catalytic activity. In terms of biological role, catalytic subunit of the essential mitochondrial processing protease (MPP), which cleaves the mitochondrial sequence off newly imported precursors proteins. Preferentially, cleaves after an arginine at position P2. This Lentinula edodes (Shiitake mushroom) protein is Mitochondrial-processing peptidase subunit beta (mppB).